The sequence spans 141 residues: uncharacterized protein (141 aa).

This is an uncharacterized protein from Human cytomegalovirus (strain AD169) (HHV-5).